We begin with the raw amino-acid sequence, 309 residues long: Porphobilinogen deaminase (309 aa).

Residue Cys241 is modified to S-(dipyrrolylmethanemethyl)cysteine.

It belongs to the HMBS family. As to quaternary structure, monomer. It depends on dipyrromethane as a cofactor.

The catalysed reaction is 4 porphobilinogen + H2O = hydroxymethylbilane + 4 NH4(+). Its pathway is porphyrin-containing compound metabolism; protoporphyrin-IX biosynthesis; coproporphyrinogen-III from 5-aminolevulinate: step 2/4. In terms of biological role, tetrapolymerization of the monopyrrole PBG into the hydroxymethylbilane pre-uroporphyrinogen in several discrete steps. This Bacillus thuringiensis (strain Al Hakam) protein is Porphobilinogen deaminase.